Reading from the N-terminus, the 506-residue chain is Sodium-coupled neutral amino acid symporter 2 (506 aa).

Residues 1–23 (MKKAEMGRFSISPDEDSSSYSSN) form a disordered region. The Cytoplasmic portion of the chain corresponds to 1-76 (MKKAEMGRFS…HPGTTSFGMS (76 aa)). Residues 1-96 (MKKAEMGRFS…SGILGLSYAM (96 aa)) form a regulates protein turnover upon amino acid deprivation region. Phosphoserine is present on residues Ser-10, Ser-12, Ser-21, Ser-22, and Ser-55. The helical transmembrane segment at 77 to 96 (VFNLSNAIVGSGILGLSYAM) threads the bilayer. Na(+) is bound at residue Asn-82. Residues 97-102 (ANTGIA) lie on the Extracellular side of the membrane. Residues 103 to 123 (LFIILLTFVSIFSLYSVHLLL) form a helical membrane-spanning segment. The Cytoplasmic portion of the chain corresponds to 124–158 (KTANEGGSLLYEQLGYKAFGLVGKLAASGSITMQN). A helical membrane pass occupies residues 159 to 177 (IGAMSSYLFIVKYELPLVI). Over 178 to 188 (QALTNIEDKTG) the chain is Extracellular. A helical membrane pass occupies residues 189–209 (LWYLNGNYLVLLVSLVVILPL). At 210 to 217 (SLFRNLGY) the chain is on the cytoplasmic side. The helical transmembrane segment at 218-238 (LGYTSGLSLLCMVFFLIVVIC) threads the bilayer. Over 239–292 (KKFQVPCPVEAALIINETINTTLTQPTALVPALSHNVTENDSCRPHYFIFNSQT) the chain is Extracellular. Residues Cys-245 and Cys-281 are joined by a disulfide bond. N-linked (GlcNAc...) asparagine glycosylation is found at Asn-258 and Asn-274. A helical membrane pass occupies residues 293–313 (VYAVPILIFSFVCHPAVLPIY). Residues 314 to 329 (EELKDRSRRRMMNVSK) are Cytoplasmic-facing. The chain crosses the membrane as a helical span at residues 330-350 (ISFFAMFLMYLLAALFGYLTF). The Extracellular segment spans residues 351–371 (YEHVESELLHTYSSILGTDIL). The helical transmembrane segment at 372-392 (LLIVRLAVLMAVTLTVPVVIF) threads the bilayer. A Na(+)-binding site is contributed by Thr-386. The Cytoplasmic segment spans residues 393–413 (PIRSSVTHLLCASKDFSWWRH). The helical transmembrane segment at 414–434 (SLITVSILAFTNLLVIFVPTI) threads the bilayer. Over 435-436 (RD) the chain is Extracellular. The helical transmembrane segment at 437–457 (IFGFIGASAASMLIFILPSAF) threads the bilayer. At 458–472 (YIKLVKKEPMKSVQK) the chain is on the cytoplasmic side. A helical membrane pass occupies residues 473 to 495 (IGALFFLLSGVLVMTGSMALIVL). The Extracellular segment spans residues 496 to 506 (DWVHNAPGGGH).

This sequence belongs to the amino acid/polyamine transporter 2 family. In terms of processing, polyubiquitination by NEDD4L regulates the degradation and the activity of SLC38A2. As to expression, ubiquitously expressed. Expressed in neocortex. Widely expressed in the central nervous system with higher concentrations in caudal regions. Expressed by glutamatergic and GABAergic neurons together with astrocytes and other non-neuronal cells in the cerebral cortex (at protein level).

It localises to the cell membrane. It carries out the reaction L-alanine(in) + Na(+)(in) = L-alanine(out) + Na(+)(out). It catalyses the reaction glycine(in) + Na(+)(in) = glycine(out) + Na(+)(out). The enzyme catalyses L-serine(in) + Na(+)(in) = L-serine(out) + Na(+)(out). The catalysed reaction is L-proline(in) + Na(+)(in) = L-proline(out) + Na(+)(out). It carries out the reaction L-methionine(in) + Na(+)(in) = L-methionine(out) + Na(+)(out). It catalyses the reaction L-histidine(in) + Na(+)(in) = L-histidine(out) + Na(+)(out). The enzyme catalyses L-asparagine(in) + Na(+)(in) = L-asparagine(out) + Na(+)(out). The catalysed reaction is L-glutamine(in) + Na(+)(in) = L-glutamine(out) + Na(+)(out). It carries out the reaction L-threonine(in) + Na(+)(in) = L-threonine(out) + Na(+)(out). It catalyses the reaction L-leucine(in) + Na(+)(in) = L-leucine(out) + Na(+)(out). The enzyme catalyses L-phenylalanine(in) + Na(+)(in) = L-phenylalanine(out) + Na(+)(out). Its activity is regulated as follows. Inhibited by N-methyl-D-glucamine. Inhibited by choline. Allosteric regulation of sodium ions binding by pH. Its function is as follows. Symporter that cotransports neutral amino acids and sodium ions from the extracellular to the intracellular side of the cell membrane. The transport is pH-sensitive, Li(+)-intolerant, electrogenic, driven by the Na(+) electrochemical gradient and cotransports of neutral amino acids and sodium ions with a stoichiometry of 1:1. May function in the transport of amino acids at the blood-brain barrier. May function in the transport of amino acids in the supply of maternal nutrients to the fetus through the placenta. Maintains a key metabolic glutamine/glutamate balance underpinning retrograde signaling by dendritic release of the neurotransmitter glutamate. Transports L-proline in differentiating osteoblasts for the efficient synthesis of proline-enriched proteins and provides proline essential for osteoblast differentiation and bone formation during bone development. In Homo sapiens (Human), this protein is Sodium-coupled neutral amino acid symporter 2.